The sequence spans 335 residues: Glyceraldehyde-3-phosphate dehydrogenase (335 aa).

NAD(+)-binding positions include 10–11 (RI), Asp-33, Arg-77, and Ser-119. D-glyceraldehyde 3-phosphate is bound by residues 150 to 152 (SCT), Thr-181, 210 to 211 (TG), and Arg-233. Residue Cys-151 is the Nucleophile of the active site. Asn-315 serves as a coordination point for NAD(+).

It belongs to the glyceraldehyde-3-phosphate dehydrogenase family. Homotetramer.

It is found in the cytoplasm. It carries out the reaction D-glyceraldehyde 3-phosphate + phosphate + NAD(+) = (2R)-3-phospho-glyceroyl phosphate + NADH + H(+). It functions in the pathway carbohydrate degradation; glycolysis; pyruvate from D-glyceraldehyde 3-phosphate: step 1/5. Functionally, catalyzes the oxidative phosphorylation of glyceraldehyde 3-phosphate (G3P) to 1,3-bisphosphoglycerate (BPG) using the cofactor NAD. The first reaction step involves the formation of a hemiacetal intermediate between G3P and a cysteine residue, and this hemiacetal intermediate is then oxidized to a thioester, with concomitant reduction of NAD to NADH. The reduced NADH is then exchanged with the second NAD, and the thioester is attacked by a nucleophilic inorganic phosphate to produce BPG. The polypeptide is Glyceraldehyde-3-phosphate dehydrogenase (gap) (Chlamydia pneumoniae (Chlamydophila pneumoniae)).